Reading from the N-terminus, the 395-residue chain is ADP-ribosylation factor-like protein 13A (395 aa).

Residues 28-35, 71-75, and 130-133 contribute to the GTP site; these read GLDNSGKS, DLTGD, and NKQD.

This sequence belongs to the small GTPase superfamily. Arf family.

This is ADP-ribosylation factor-like protein 13A (Arl13a) from Rattus norvegicus (Rat).